Consider the following 526-residue polypeptide: Organic cation/carnitine transporter 4 (526 aa).

At 1–52 (MESPEDRNGNDVRQPLLEKIPVKKEAEGEERLCIDEMLQRYCGEFGRWQLKH) the chain is on the cytoplasmic side. A helical transmembrane segment spans residues 53–73 (FVLTCIAWALEAFHTMVMIFA). Over 74–123 (DQEPEWRCVGSDCRVGSLNCELDPSSWEWTAGKGSSTVSEWGLICGDKYK) the chain is Extracellular. The helical transmembrane segment at 124-144 (VGLVQALFFAGCMIGAGVFGH) threads the bilayer. Residues 145–153 (LSDSKLGRK) are Cytoplasmic-facing. The chain crosses the membrane as a helical span at residues 154–174 (GSLTVVCIINAIFGIATAFSP). At 175–179 (NYWTY) the chain is on the extracellular side. A helical transmembrane segment spans residues 180–200 (VVLRFLTGFSTGGVGLTAFVL). An ATP-binding site is contributed by 201–208 (ATEPIGPS). Residues 201–214 (ATEPIGPSKRGVAG) lie on the Cytoplasmic side of the membrane. Residues 215-235 (MSTFYFFSAGIAVLSGIAYVF) traverse the membrane as a helical segment. The Extracellular segment spans residues 236-240 (RSWRE). Residues 241–261 (LFIVSSLPSLLFLLIVIPFIS) traverse the membrane as a helical segment. The Cytoplasmic portion of the chain corresponds to 262–331 (ESPRWYLVRG…ILSPLMRMRL (70 aa)). The helical transmembrane segment at 332 to 352 (VISVAISFTVSIVYYGLSLNV) threads the bilayer. The Extracellular segment spans residues 353–360 (GNLKTNLY). Residues 361–381 (LNVFVNAVSEMPAFAITAVLL) form a helical membrane-spanning segment. The Cytoplasmic portion of the chain corresponds to 382 to 390 (DKYGRKPLS). A helical membrane pass occupies residues 391–411 (IGTQWFSCVFCLVGFSVWGAG). Residues 412 to 418 (PWKSVRM) lie on the Extracellular side of the membrane. The helical transmembrane segment at 419–439 (VSGVLGIFGMAGTYNLLFIYI) threads the bilayer. At 440-451 (AELFPTVVRNAA) the chain is on the cytoplasmic side. A helical transmembrane segment spans residues 452–472 (LGCATQAAQMGAILAPFVVVL). Over 473–475 (GEE) the chain is Extracellular. A helical membrane pass occupies residues 476-496 (LPFGVFAVCGLVGGGLAFYLP). Topologically, residues 497–526 (ETLNKPLYDTMFGMHEAESESNRERGEVIC) are cytoplasmic.

Belongs to the major facilitator (TC 2.A.1) superfamily. Organic cation transporter (TC 2.A.1.19) family. As to expression, mostly expressed in siliques, and, to a lower extent, in stems, leaves, flowers and siliques. Present in pollen. In the stems of secondary inflorescences present in the phloem cells and xylem parenchyma cells.

The protein resides in the vacuole membrane. High affinity carnitine transporter involved in the active cellular uptake of carnitine. Also transports organic cations. This chain is Organic cation/carnitine transporter 4 (OCT4), found in Arabidopsis thaliana (Mouse-ear cress).